Here is a 382-residue protein sequence, read N- to C-terminus: MGSQTMAVALPRDLRQDANLAKRRHAELCRQKRVFNARNRIIGGDTEAWDVQVHDQKIKEATEKARHETFAAEMRQNDKIMCILENRKKRDRKNLCRAINDFQQSFQKPETRREFDLSDPLALKKDLPARQSDNDVRNTISGMQKFMGEDLNFHERKKFQEEQNREWSLQQQREWKNARAEQKCAEALYTETRLQFDETAKHLQKLESTTRKAVCASVKDFNKSQAIESVERKKQEKKQEQEDNLAEITNLLRGDLLSENPQQAASSFGPHRVVPDRWKGMTQEQLEQIRLVQKQQIQEKLRLQEEKRQRDLDWDRRRIQGARATLLFERQQWRRQRDLRRALDSSNLSLAKEQHLQKKYMNEVYTNQPTGDYFTQFNTGSR.

Residues 222–255 (NKSQAIESVERKKQEKKQEQEDNLAEITNLLRGD) adopt a coiled-coil conformation.

Belongs to the RIB43A family. Microtubule inner protein component of sperm flagellar doublet microtubules. In terms of tissue distribution, expressed in airway epithelial cells.

The protein resides in the cytoplasm. It is found in the cytoskeleton. The protein localises to the cilium axoneme. It localises to the flagellum axoneme. Its function is as follows. Microtubule inner protein (MIP) part of the dynein-decorated doublet microtubules (DMTs) in cilia axoneme, which is required for motile cilia beating. This chain is RIB43A-like with coiled-coils protein 2, found in Homo sapiens (Human).